The following is a 78-amino-acid chain: Dihydrofolate reductase type 2 (78 aa).

NADP(+) is bound by residues 32-36 (KKSGA) and 66-69 (VQIY). I68 is a binding site for substrate.

In terms of assembly, homotetramer.

The enzyme catalyses (6S)-5,6,7,8-tetrahydrofolate + NADP(+) = 7,8-dihydrofolate + NADPH + H(+). It functions in the pathway cofactor biosynthesis; tetrahydrofolate biosynthesis; 5,6,7,8-tetrahydrofolate from 7,8-dihydrofolate: step 1/1. In terms of biological role, key enzyme in folate metabolism. Catalyzes an essential reaction for de novo glycine and purine synthesis, and for DNA precursor synthesis. This is Dihydrofolate reductase type 2 from Escherichia coli.